The sequence spans 96 residues: Large ribosomal subunit protein eL21 (96 aa).

Belongs to the eukaryotic ribosomal protein eL21 family.

This Methanosphaerula palustris (strain ATCC BAA-1556 / DSM 19958 / E1-9c) protein is Large ribosomal subunit protein eL21.